The primary structure comprises 130 residues: uncharacterized protein (130 aa).

The protein belongs to the HesB/IscA family.

This is an uncharacterized protein from Buchnera aphidicola subsp. Acyrthosiphon pisum (strain APS) (Acyrthosiphon pisum symbiotic bacterium).